A 147-amino-acid polypeptide reads, in one-letter code: MPGKKSPYGLFAGGKLKKKRQKFRWNDVTYKRRMLGLAEKYDPLEGAPMARGIVLEKVGVEARKPNAAVRKCVRVQLVKNGKVVTAFVPYDGGLNYINEHDEVIIERIGGPEGKSLGDIPGVRFKVVKVNGVSLWAIWRGKKQKPTR.

The protein belongs to the universal ribosomal protein uS12 family. Part of the 30S ribosomal subunit.

With S4 and S5 plays an important role in translational accuracy. Located at the interface of the 30S and 50S subunits. This Pyrobaculum calidifontis (strain DSM 21063 / JCM 11548 / VA1) protein is Small ribosomal subunit protein uS12.